The chain runs to 586 residues: Arrestin-related trafficking adapter 5 (586 aa).

2 disordered regions span residues 123-145 and 182-217; these read GENAENQHNSSSGRSTSNQDMDT and ENGVTGTPFEGLRENARSRSSSSNTLNNNSHSYSNR. Polar residues predominate over residues 126–145; that stretch reads AENQHNSSSGRSTSNQDMDT. The span at 199–216 shows a compositional bias: low complexity; it reads SRSSSSNTLNNNSHSYSN. Lys364 is covalently cross-linked (Glycyl lysine isopeptide (Lys-Gly) (interchain with G-Cter in ubiquitin)).

It belongs to the arrestin family. Interacts with RSP5. In terms of processing, ubiquitinated by RSP5.

Its function is as follows. May regulate endocytosis by recruiting RSP5 ubiquitin ligase activity to specific plasma membrane proteins in response to extracellular stimuli. This chain is Arrestin-related trafficking adapter 5 (ART5), found in Saccharomyces cerevisiae (strain ATCC 204508 / S288c) (Baker's yeast).